Reading from the N-terminus, the 241-residue chain is Small ribosomal subunit protein uS2 (241 aa).

This sequence belongs to the universal ribosomal protein uS2 family.

The sequence is that of Small ribosomal subunit protein uS2 from Proteus mirabilis (strain HI4320).